Reading from the N-terminus, the 317-residue chain is MPIHLECMSHTPLHGYFDPAPAVVAEVERVQRAARERVDAFDPELVIVFAPDHYNGFFYDVMPQFCIGASATAVGDFGSAAGPLPVARDAALALADAALASDIDVAVSYRMQVDHGCAQALEVLTGRIDRFPVVPVFINSVAPPMASCRRARLLGDAIGRVVARMNRRVLLIGSGGISHEPPVPEIAGADDVVAERLIAGRNPSPASRDARQSSTVAAARAFAAGDSRLHPLNPAWDRRFLELLERGDLTAADGLTNEAITRDAGKSAHEIRTWVAAFGALAASGPYAASIDYYRAIPEWIAGFGAMHARERTLSRR.

Residue His-115 is the Proton donor of the active site. His-179 (proton acceptor) is an active-site residue.

It belongs to the LigB/MhpB extradiol dioxygenase family. Homotetramer. Fe(2+) is required as a cofactor.

It catalyses the reaction 3-(2,3-dihydroxyphenyl)propanoate + O2 = (2Z,4E)-2-hydroxy-6-oxonona-2,4-dienedioate + H(+). The enzyme catalyses (2E)-3-(2,3-dihydroxyphenyl)prop-2-enoate + O2 = (2Z,4E,7E)-2-hydroxy-6-oxonona-2,4,7-trienedioate + H(+). Its pathway is aromatic compound metabolism; 3-phenylpropanoate degradation. In terms of biological role, catalyzes the non-heme iron(II)-dependent oxidative cleavage of 2,3-dihydroxyphenylpropionic acid and 2,3-dihydroxicinnamic acid into 2-hydroxy-6-ketononadienedioate and 2-hydroxy-6-ketononatrienedioate, respectively. In Burkholderia vietnamiensis (strain G4 / LMG 22486) (Burkholderia cepacia (strain R1808)), this protein is 2,3-dihydroxyphenylpropionate/2,3-dihydroxicinnamic acid 1,2-dioxygenase.